The chain runs to 325 residues: Ferrochelatase (325 aa).

Residues H172 and E267 each contribute to the Fe cation site.

The protein belongs to the ferrochelatase family.

It localises to the cytoplasm. It carries out the reaction heme b + 2 H(+) = protoporphyrin IX + Fe(2+). The protein operates within porphyrin-containing compound metabolism; protoheme biosynthesis; protoheme from protoporphyrin-IX: step 1/1. Its function is as follows. Catalyzes the ferrous insertion into protoporphyrin IX. The polypeptide is Ferrochelatase (Acidobacterium capsulatum (strain ATCC 51196 / DSM 11244 / BCRC 80197 / JCM 7670 / NBRC 15755 / NCIMB 13165 / 161)).